Consider the following 367-residue polypeptide: Cytochrome P450 119 (367 aa).

Residues histidine 76, arginine 80, threonine 257, arginine 259, histidine 315, and cysteine 317 each coordinate heme.

Belongs to the cytochrome P450 family. Heme is required as a cofactor.

The protein localises to the cytoplasm. In Sulfurisphaera tokodaii (strain DSM 16993 / JCM 10545 / NBRC 100140 / 7) (Sulfolobus tokodaii), this protein is Cytochrome P450 119 (cyp119).